Consider the following 460-residue polypeptide: Bifunctional protein GlmU (460 aa).

The pyrophosphorylase stretch occupies residues 1 to 229 (MTNYAIILAA…FNESLGVNDR (229 aa)). Residues 8-11 (LAAG), Lys-22, Gln-72, and 77-78 (GT) each bind UDP-N-acetyl-alpha-D-glucosamine. Position 102 (Asp-102) interacts with Mg(2+). Residues Gly-139, Glu-154, Asn-169, and Asn-227 each contribute to the UDP-N-acetyl-alpha-D-glucosamine site. Residue Asn-227 participates in Mg(2+) binding. The tract at residues 230 to 250 (VALATAETVMRQRITQKHMVN) is linker. The segment at 251–460 (GVTFQNPETV…RLAHHPSRSK (210 aa)) is N-acetyltransferase. Positions 332 and 350 each coordinate UDP-N-acetyl-alpha-D-glucosamine. Residue His-362 is the Proton acceptor of the active site. UDP-N-acetyl-alpha-D-glucosamine contacts are provided by Tyr-365 and Asn-376. Residues Ala-379, 385–386 (NY), Ser-404, Ala-422, and Arg-439 each bind acetyl-CoA.

In the N-terminal section; belongs to the N-acetylglucosamine-1-phosphate uridyltransferase family. The protein in the C-terminal section; belongs to the transferase hexapeptide repeat family. In terms of assembly, homotrimer. The cofactor is Mg(2+).

It localises to the cytoplasm. It carries out the reaction alpha-D-glucosamine 1-phosphate + acetyl-CoA = N-acetyl-alpha-D-glucosamine 1-phosphate + CoA + H(+). The catalysed reaction is N-acetyl-alpha-D-glucosamine 1-phosphate + UTP + H(+) = UDP-N-acetyl-alpha-D-glucosamine + diphosphate. It participates in nucleotide-sugar biosynthesis; UDP-N-acetyl-alpha-D-glucosamine biosynthesis; N-acetyl-alpha-D-glucosamine 1-phosphate from alpha-D-glucosamine 6-phosphate (route II): step 2/2. The protein operates within nucleotide-sugar biosynthesis; UDP-N-acetyl-alpha-D-glucosamine biosynthesis; UDP-N-acetyl-alpha-D-glucosamine from N-acetyl-alpha-D-glucosamine 1-phosphate: step 1/1. It functions in the pathway bacterial outer membrane biogenesis; LPS lipid A biosynthesis. Functionally, catalyzes the last two sequential reactions in the de novo biosynthetic pathway for UDP-N-acetylglucosamine (UDP-GlcNAc). The C-terminal domain catalyzes the transfer of acetyl group from acetyl coenzyme A to glucosamine-1-phosphate (GlcN-1-P) to produce N-acetylglucosamine-1-phosphate (GlcNAc-1-P), which is converted into UDP-GlcNAc by the transfer of uridine 5-monophosphate (from uridine 5-triphosphate), a reaction catalyzed by the N-terminal domain. The chain is Bifunctional protein GlmU from Streptococcus pyogenes serotype M28 (strain MGAS6180).